A 546-amino-acid chain; its full sequence is Acyl-CoA ligase oryP (546 aa).

Residues 166 to 174 (TSGTTGAPK), 300 to 305 (QFWLNL), and Arg403 each bind ATP. CoA-binding positions include 412 to 414 (WDH) and 482 to 484 (LLR). Lys499 lines the ATP pocket.

The protein belongs to the ATP-dependent AMP-binding enzyme family.

It participates in secondary metabolite biosynthesis. Its function is as follows. Acyl-CoA ligase; part of the gene cluster that mediates the biosynthesis of oryzines, natural products with an unusual maleidride backbone. The two subunits of the fungal fatty acid synthase oryfasA and oryfasB probably form octenoic acid. This fatty acid is most likely activated by the acyl-CoA ligase oryP to give octenyl-CoA before the citrate synthase-like protein oryE catalyzes condensation with oxaloacetate to form tricarboxylic acid. The next steps of the pathways are conjectural, but a favorite possible route has been proposed, beginning with decarboxylation and concomitant dehydration by the decarboxylase oryM, followed by tautomerization, which may lead to the production of a diene intermediate. Reduction of this diene intermediate could give the known metabolite piliformic acid. On the pathway to oryzine B and oryzine A, however, hydroxylation of the diene by the alpha-ketoglutarate-dependent dioxygenase oryG and lactonisation by the lactonohydrolases oryH or oryL could give oryzine B directly. Finally, enoyl reduction by the dehydrogenase oryD would then convert oryzine B into oryzine A. The sequence is that of Acyl-CoA ligase oryP from Aspergillus oryzae (strain ATCC 42149 / RIB 40) (Yellow koji mold).